The sequence spans 135 residues: MSSSNNTVVYWGTGRRKTSVARVRLVPGNGTITINGRPGDNYLNYNPAYLAAVKAPLQTLGLSTEYDVLVNVRGGGLTGQADAIKQGAARALCELSVDNRKPLKTEGHLSRDPRAKERRKYGLKKARKAPQFSKR.

The span at 102–115 (PLKTEGHLSRDPRA) shows a compositional bias: basic and acidic residues. The disordered stretch occupies residues 102 to 135 (PLKTEGHLSRDPRAKERRKYGLKKARKAPQFSKR). The segment covering 116 to 135 (KERRKYGLKKARKAPQFSKR) has biased composition (basic residues).

It belongs to the universal ribosomal protein uS9 family.

The protein is Small ribosomal subunit protein uS9 of Synechococcus sp. (strain CC9311).